The chain runs to 2439 residues: MLDFPRFSLFLFLLFSSFLFSSFVHAATVFSSSLKTCQSQCEERNLAYPLDSGEVHWTGLAEFNYTTRISSCKHGCEDVDERESKCNVKCAEEGIVTNSCKQGCRAVLVSFLAQAQALLIQTRVNMEVLETAMKLKWEFPETLAEELKEIANADIFWFSQTRPLNGILGWRWTSLPQSSFRNSSLVSEVHVPFEHGEHVEVRLALSYRNQVLVSRTTTYHLPLSKAGTTLEVIGQLQLSDDRVAVCYRTNQPTPKFKLTVMTMDDNTINTEESISRCHLFSNLPRDNCCKASISAIDEHGATTAFVEIKLDFFVNQVEIELVSAASSSRIIFSNGTHLLENEELAQYALGDSATVIPFPLPTDDTITAIAGITDTIIAIGSSKGSLWTFQMSANQTDEDQPSSVIQLKTVGEMDTKITQIEIDHIQRTLYAVQHDKGILRCKLRTMESEESPTCVLIVNNDALNPPKEITLDPVNGHIYSLNVDNKVYRTEMIAFNATGIETVASLQYLKDMSPSNGIFFDVSKFLLYSALQNGSMMTLNPVTDQAHIFKDSGYTDVQNFRIKSDLIYWMKKKCGKTDADENCIFTENLQRSEEDIPNKFTYSSALMSYSFLEEILLKPRIVAVSSIALLTSDKTGRVSWDEANTLPFQAQGSSWRNFTYFLKITAPDITDFEAVEMYTSSTDVKIDVTPGNQYNAQVQVCSDDFCSTPSSTSNTALPDLGGGVPFVFTKKKADDIISIDMLGNLVITDDSVKAVERMQNPHVLDNTTKTVYLAGDHSMGIFKKDLDDATGSPKPFKDGLFVEMMSIMPSRSMILIASSYKITSYRLPTTFDFEYYSCEEPLEDCAEVMGISSDDSTGMVYFLTQSRNGTVILWESDPENRAPRDIATAPSIVPFRRFLIIHDKMILVTKNNHIVQTDKSLKVVNVATELERVDRILPLRYAAISHKIEFTDEIKFMEGSKTDLQWTLSPPLEAGTVIFKVSFFREKMGGQDAPITTIQSDTNFTIPPEVLKEWSSAQRFDVSIQAITPWATAVLNRTGLTAPVKPPTPPTQLKIFATQQKTVDGPRALISFFWGPPLEWNGTPYQYIVNCTKDDGKVITIDSSELKPLVKLFAIDSTNSLIIINDLAHEEPRRETRQVTQPVKLDYQAMAFIGEDLYTVRKEGESAQPFLVQIDTNHIDNTVHKVSIGGDVTRIDAMTSDWVGNRLIFVAGTNLYQLSLEPFLSTSLLNPHKLITLSAATDAKQLAYDPFMNTAYLLTKNGSLFALDMNKNTEANLALTVPCLASQTVTWMMTEFAWNRASSPKIYALTWNGLINVDLAEDFQCNEVRIDWSKFGEKGLKAISSFAIADKLFAFVTSSEMLIYGRDTVTPITIANPPLKQILAVSQSSQPYPERSCFELPSSKGIVFSIVNEGKTGALLEVTKSSSSSACLDVSMPQTQYEIYFTRKNTDKVKHVRSFSDRIHVENGILDKETDYDVTVTWLNRYSPASGVSSSRSFRTGFGYPSAPRDPHAIPVTPDTVYLYWSLPETLNAPISEIKYKISQQAAGISVPTSIAVIPLSETVSSNISSDTTACLINPCRVKIANLRPSNEYKFWVTATHISHLDAATILKDDDAVSSEAVARTLDVPGTLRPDNVTGSSLLLRWNGLEPEHRPTSIAIQYRESGGANNEWQSPTNASFEPDVATELVPVTNLLSATTYDYRFVATYTGTYTIDGKVLAFKEDYLQLIQQARTKAGVPTAPQSVEAKIDTEGWIVTWKEPMSDGGSPITSYAVETRINKTAEWEIAERGLDGWKTWWRPGKSETSSSMSYSSEVSEFRIRAANIEGFGAYAYTEEKKEEKEEEKGGILPYFLGISIILLLAAMILVGCFWLKSRRRQQMKKREAEDERNCIRLDVVANMNFTNSRQTLSPEYESEIRNLPIVDYNDVEIVRHISDCSYGSVHEGIAEEVPLSWEKQVKVAVKQLRPKSANHDFDRMMFMKEAILLNNLDHNIVKELGVCVSPGQGLILLEYMEGGNLLNFLRESAPSEMQASELSTRDLLAISVDIARGMNYLERLPHVHKNLSARKCLLSGRPGVAKLEMGMPRALSKGEINRVDLESMQSVKWMAPEVFKDLMFTSKSDVWAYGVLLYEIFSFGEEPYGSMDSRRVITDVRDGNLTLPVPPYCPSKKICKVMKMCLISDPNKRASFATILKIFETCRDDQQSQDDKRIHFNEGSDNINFNASQDSTSSREPPSPSHRIREFTQISGDLEPPSPSPLNQSFGGFEHPYEGDRPATMWNASGARNSAKNSIGRSMKKDKFRNPIHSMDDLVARSQRPLSIHSEDTESTDFGGATSSMHSPSSSNRTNHYELPMSRLSAAPPIGIVNNAFESSNNSLNMSRSWTGLAGEVNPNPAGASSSGTLPHHANSMVHLRAPTGQPPTRVNRNSSGGTCRSVSQV.

A signal peptide spans 1–26 (MLDFPRFSLFLFLLFSSFLFSSFVHA). Over 27–1851 (ATVFSSSLKT…EEEKGGILPY (1825 aa)) the chain is Extracellular. N-linked (GlcNAc...) asparagine glycans are attached at residues Asn64, Asn182, Asn334, Asn394, Asn496, Asn533, Asn657, Asn766, Asn868, Asn1003, Asn1036, Asn1090, and Asn1261. The Fibronectin type-III 1 domain maps to 618-720 (KPRIVAVSSI…STSNTALPDL (103 aa)). 4 Fibronectin type-III domains span residues 1403–1503 (SKGI…TGFG), 1507–1628 (APRD…TLDV), 1629–1732 (PGTL…IQQA), and 1738–1843 (VPTA…EKEE). N-linked (GlcNAc...) asparagine glycans are attached at residues Asn1567, Asn1636, Asn1677, and Asn1779. A helical transmembrane segment spans residues 1852-1872 (FLGISIILLLAAMILVGCFWL). The Cytoplasmic portion of the chain corresponds to 1873–2439 (KSRRRQQMKK…GGTCRSVSQV (567 aa)). A Protein kinase domain is found at 1928-2199 (VEIVRHISDC…ATILKIFETC (272 aa)). Residues 1934 to 1942 (ISDCSYGSV) and Lys1963 contribute to the ATP site. Disordered regions lie at residues 2214–2277 (NEGS…RPAT), 2315–2348 (SQRP…NRTN), and 2412–2439 (HLRA…VSQV). 3 stretches are compositionally biased toward polar residues: residues 2216-2233 (GSDN…SSRE), 2334-2347 (ATSS…SNRT), and 2420-2439 (PPTR…VSQV).

It localises to the membrane. Its function is as follows. Involved in larval development and locomotion. This chain is Protein roller-3, found in Caenorhabditis briggsae.